The following is a 168-amino-acid chain: Large ribosomal subunit protein uL10 (168 aa).

It belongs to the universal ribosomal protein uL10 family. In terms of assembly, part of the ribosomal stalk of the 50S ribosomal subunit. The N-terminus interacts with L11 and the large rRNA to form the base of the stalk. The C-terminus forms an elongated spine to which L12 dimers bind in a sequential fashion forming a multimeric L10(L12)X complex.

Its function is as follows. Forms part of the ribosomal stalk, playing a central role in the interaction of the ribosome with GTP-bound translation factors. The chain is Large ribosomal subunit protein uL10 (rplJ) from Buchnera aphidicola subsp. Baizongia pistaciae (strain Bp).